Here is a 562-residue protein sequence, read N- to C-terminus: Potassium voltage-gated channel subfamily V member 2 (562 aa).

The span at 1–10 shows a compositional bias: basic and acidic residues; that stretch reads MLKQSNERRW. Positions 1-34 are disordered; sequence MLKQSNERRWSLSYKPWSTPETEDVPNTGSNQHR. Residues 1-163 lie on the Cytoplasmic side of the membrane; the sequence is MLKQSNERRW…TDEYFFDRDP (163 aa). A helical transmembrane segment spans residues 164-184; the sequence is AVFQLIYNFYTSGVLLVRDEL. Residues 185–269 are Extracellular-facing; the sequence is CPRSFLEELG…KPFSSVAAKA (85 aa). The helical transmembrane segment at 270-290 threads the bilayer; that stretch reads MGVATNLFVLISVVALALNTV. Residues 291 to 344 are Cytoplasmic-facing; it reads EEMQHQAEQGTGGGDPRPILEHVEMLCVAFFTLEFLLRLASTPNLQRFARSALN. Residues 345–365 form a helical membrane-spanning segment; it reads LVDLVAILPFYLQLLLECFTS. The Extracellular segment spans residues 366 to 391; sequence EDQRHNKDSPREHDLETVGRVGKVGQ. The chain crosses the membrane as a helical; Voltage-sensor span at residues 392 to 412; the sequence is VLRIMRLMRIFRILKLARHST. Over 413–427 the chain is Cytoplasmic; that stretch reads GLRAFGFTLRQCYQQ. Residues 428–448 form a helical membrane-spanning segment; the sequence is VGCLMLFITMGIFSFSAAVYS. Residues 449–461 are Extracellular-facing; it reads VEHDVPGTNFTSI. The N-linked (GlcNAc...) asparagine glycan is linked to Asn-457. The pore-forming intramembrane region spans 462-482; the sequence is LHAWWWAAVSISTVGYGDMYP. Residues 474-479 carry the Selectivity filter motif; that stretch reads TVGYGD. Topologically, residues 483-488 are extracellular; that stretch reads ETHLGR. A helical transmembrane segment spans residues 489 to 509; that stretch reads LFAFLCIAFGIILNGMPISIL. At 510–562 the chain is on the cytoplasmic side; the sequence is YNKFSDYYSKLKAYEYTAIRRERGKVNFMQRATKKMAECLSESHAQSTTRQEN.

This sequence belongs to the potassium channel family. V (TC 1.A.1.2) subfamily. Kv8.2/KCNV2 sub-subfamily. In terms of assembly, heteromultimer with KCNB1, KCNC1 and KCNF1. Does not form homomultimers.

The protein localises to the cell membrane. Functionally, potassium channel subunit. Modulates channel activity by shifting the threshold and the half-maximal activation to more negative values. The polypeptide is Potassium voltage-gated channel subfamily V member 2 (Kcnv2) (Mus musculus (Mouse)).